A 147-amino-acid polypeptide reads, in one-letter code: Hemoglobin subunit beta (147 aa).

Residues 3–147 enclose the Globin domain; that stretch reads EWTDKERSII…VVSALGKQYH (145 aa). Residues His64 and His93 each contribute to the heme b site.

It belongs to the globin family. As to quaternary structure, heterotetramer of two alpha chains and two beta chains. Red blood cells.

Involved in oxygen transport from gills to the various peripheral tissues. The polypeptide is Hemoglobin subunit beta (hbb) (Trematomus hansoni (Striped rockcod)).